Here is a 145-residue protein sequence, read N- to C-terminus: uncharacterized protein (145 aa).

This is an uncharacterized protein from Escherichia coli (strain K12).